We begin with the raw amino-acid sequence, 70 residues long: Delta-hexatoxin-Mg1b (70 aa).

Positions 1 to 26 (MKILEKALLENDSAAEEESRNLRTKR) are cleaved as a signal peptide. 4 disulfides stabilise this stretch: C27/C41, C34/C46, C40/C57, and C42/C68.

As to expression, expressed by the venom gland.

The protein resides in the secreted. In terms of biological role, inhibits tetrodotoxin-sensitive sodium channels (Nav). Intracranial injection into mice causes strong convulsions and death. Intrathorax injection into crickets causes paralysis prolonged for 2 minutes, followed by recovery. The protein is Delta-hexatoxin-Mg1b of Macrothele gigas (Japanese funnel web spider).